Reading from the N-terminus, the 465-residue chain is Glutamate--tRNA ligase 2 (465 aa).

A 'HIGH' region motif is present at residues 8–18 (PSPTGLMHLGN). A 'KMSKS' region motif is present at residues 249 to 253 (PLSKR). Lys252 serves as a coordination point for ATP.

It belongs to the class-I aminoacyl-tRNA synthetase family. Glutamate--tRNA ligase type 1 subfamily. In terms of assembly, monomer.

Its subcellular location is the cytoplasm. The catalysed reaction is tRNA(Glu) + L-glutamate + ATP = L-glutamyl-tRNA(Glu) + AMP + diphosphate. Its function is as follows. Catalyzes the attachment of glutamate to tRNA(Glu) in a two-step reaction: glutamate is first activated by ATP to form Glu-AMP and then transferred to the acceptor end of tRNA(Glu). In Coxiella burnetii (strain CbuK_Q154) (Coxiella burnetii (strain Q154)), this protein is Glutamate--tRNA ligase 2.